The chain runs to 153 residues: Small ribosomal subunit protein uS13 (153 aa).

It belongs to the universal ribosomal protein uS13 family.

Its subcellular location is the cytoplasm. Functionally, located at the top of the head of the 40S subunit, it contacts several helices of the 18S rRNA. The protein is Small ribosomal subunit protein uS13 (RPS18) of Chlamydomonas reinhardtii (Chlamydomonas smithii).